The primary structure comprises 212 residues: Holliday junction branch migration complex subunit RuvA (212 aa).

A domain I region spans residues 1-70; the sequence is MISYLKGSPI…EDQQILYGFS (70 aa). The segment at 71–149 is domain II; it reads TTAERELFRQ…QWRKMVGVTV (79 aa). The flexible linker stretch occupies residues 150–160; sequence TSSAAMPSLEI. Residues 160-212 form a domain III region; sequence ILEDIEMTLLALGYTNEEINKAISTLSQDNLMLKNTNTEEWIKEAIAWLSQGT.

The protein belongs to the RuvA family. In terms of assembly, homotetramer. Forms an RuvA(8)-RuvB(12)-Holliday junction (HJ) complex. HJ DNA is sandwiched between 2 RuvA tetramers; dsDNA enters through RuvA and exits via RuvB. An RuvB hexamer assembles on each DNA strand where it exits the tetramer. Each RuvB hexamer is contacted by two RuvA subunits (via domain III) on 2 adjacent RuvB subunits; this complex drives branch migration. In the full resolvosome a probable DNA-RuvA(4)-RuvB(12)-RuvC(2) complex forms which resolves the HJ.

Its subcellular location is the cytoplasm. Its function is as follows. The RuvA-RuvB-RuvC complex processes Holliday junction (HJ) DNA during genetic recombination and DNA repair, while the RuvA-RuvB complex plays an important role in the rescue of blocked DNA replication forks via replication fork reversal (RFR). RuvA specifically binds to HJ cruciform DNA, conferring on it an open structure. The RuvB hexamer acts as an ATP-dependent pump, pulling dsDNA into and through the RuvAB complex. HJ branch migration allows RuvC to scan DNA until it finds its consensus sequence, where it cleaves and resolves the cruciform DNA. This is Holliday junction branch migration complex subunit RuvA from Crocosphaera subtropica (strain ATCC 51142 / BH68) (Cyanothece sp. (strain ATCC 51142)).